The sequence spans 429 residues: MSSVVVVGTQWGDEGKGKITDFLSQNAEVVARYQGGNNAGHTIKFDDVTYKLHLIPSGIFFEDKICVLGNGMVIDPKAFVEEVAYLHERNVSTDNLRISNRAHVILPYHLKLDILQEEDKGANKIGTTKKGIGPAYMDKAARVGIRVADLMDKDAFREKLVQNLKEKNRLFEKVYEADPIQVEEILDEYYAYGQKMAPYVTDTSVVLNDAIDEGKRVLFEGAQGVMLDIDQGTYPFVTSSNPIAGGVTIGSGVGPTKINHVVGVSKAYTTRVGDGPFPTELHDEIGNQIREVGREYGTTTGRARRVGWFDSVVVRHARRVSGITDLSLNSIDVLTGIETLKICVAYRYKGEIMKEFPASLKVLAECEPVYEEMPGWQEDITGAKSLDDLPENARHYLERVSQLTEIPLSIFSVGPDRSQTNVVRSVYRP.

GTP-binding positions include 12–18 (GDEGKGK) and 40–42 (GHT). D13 functions as the Proton acceptor in the catalytic mechanism. Mg(2+) contacts are provided by D13 and G40. IMP-binding positions include 13-16 (DEGK), 38-41 (NAGH), T128, R142, Q223, T238, and R302. H41 (proton donor) is an active-site residue. Residue 298 to 304 (TTTGRAR) coordinates substrate. Residues R304, 330 to 332 (SID), and 412 to 414 (SVG) each bind GTP.

Belongs to the adenylosuccinate synthetase family. Homodimer. Requires Mg(2+) as cofactor.

The protein localises to the cytoplasm. It carries out the reaction IMP + L-aspartate + GTP = N(6)-(1,2-dicarboxyethyl)-AMP + GDP + phosphate + 2 H(+). It functions in the pathway purine metabolism; AMP biosynthesis via de novo pathway; AMP from IMP: step 1/2. In terms of biological role, plays an important role in the de novo pathway of purine nucleotide biosynthesis. Catalyzes the first committed step in the biosynthesis of AMP from IMP. This Oceanobacillus iheyensis (strain DSM 14371 / CIP 107618 / JCM 11309 / KCTC 3954 / HTE831) protein is Adenylosuccinate synthetase.